The following is a 161-amino-acid chain: 2-C-methyl-D-erythritol 2,4-cyclodiphosphate synthase (161 aa).

Residues Asp11 and His13 each contribute to the a divalent metal cation site. 4-CDP-2-C-methyl-D-erythritol 2-phosphate contacts are provided by residues Asp11–His13 and His37–Ser38. Residue His45 coordinates a divalent metal cation. 4-CDP-2-C-methyl-D-erythritol 2-phosphate is bound by residues Asp59–Gly61, Thr135–Glu138, and Arg145.

This sequence belongs to the IspF family. As to quaternary structure, homotrimer. A divalent metal cation serves as cofactor.

The catalysed reaction is 4-CDP-2-C-methyl-D-erythritol 2-phosphate = 2-C-methyl-D-erythritol 2,4-cyclic diphosphate + CMP. It functions in the pathway isoprenoid biosynthesis; isopentenyl diphosphate biosynthesis via DXP pathway; isopentenyl diphosphate from 1-deoxy-D-xylulose 5-phosphate: step 4/6. In terms of biological role, involved in the biosynthesis of isopentenyl diphosphate (IPP) and dimethylallyl diphosphate (DMAPP), two major building blocks of isoprenoid compounds. Catalyzes the conversion of 4-diphosphocytidyl-2-C-methyl-D-erythritol 2-phosphate (CDP-ME2P) to 2-C-methyl-D-erythritol 2,4-cyclodiphosphate (ME-CPP) with a corresponding release of cytidine 5-monophosphate (CMP). In Synechocystis sp. (strain ATCC 27184 / PCC 6803 / Kazusa), this protein is 2-C-methyl-D-erythritol 2,4-cyclodiphosphate synthase.